Here is a 365-residue protein sequence, read N- to C-terminus: Medium chain reductase pydE (365 aa).

An Enoyl reductase (ER) domain is found at K21–I362. Residues S185–V188, Y226, I274–G275, and K354–R355 each bind NADP(+).

It belongs to the zinc-containing alcohol dehydrogenase family. Monomer.

The protein operates within mycotoxin biosynthesis. Functionally, medium chain reductase; part of the gene cluster that mediates the biosynthesis of pyrrocidines, fungal natural products containing a macrocyclic para-cyclophane connected to a decahydrofluorene ring system that show potent antibiotic activities toward Gram-negative bacteria. Within the pathway, pydE functions synergistically with pydB, pydX and pydZ to form the cyclophane. The pathway begins with the PKS-NRPS pydA which, with the help of the trans-enoyl reductase pydC, synthesizes the polyketide-tyrosyl acyl thioester product which can be reductively off-loaded by the terminal reductase (R) domain in pydA. The alpha/beta hydrolase pydG is then required to catalyze the subsequent Knoevenagel condensation that affords the 3-pyrrolin-2-one ring, whereas the four proteins pydB, pydE, pydX and pydZ then function synergistically to form the cyclophane. PydB and the membrane-bound pydX and pydZ are lipid-binding proteins that can sequester and mold the pdyG product into the inverse S-shape. Binding of the medium chain reductase pydE to the complex would trigger the cascade oxidative cyclization. PydY is involved in the Diels-Alder cycloaddition that forms the decahydrofluorene core. Additional non-enzymatic hydroxylation yields pyrrocidine A2 which can be further reduced into pyrrocidine B by an endogenous reductase. The polypeptide is Medium chain reductase pydE (Acremonium sp).